Consider the following 398-residue polypeptide: Cyclin-dependent kinase D-1 (398 aa).

Residues 11–291 form the Protein kinase domain; the sequence is YLKREVLGQG…IQQALKHRYF (281 aa). ATP contacts are provided by residues 17 to 25 and K40; that span reads LGQGTYGVV. Y22 is subject to Phosphotyrosine. D133 (proton acceptor) is an active-site residue. At S160 the chain carries Phosphoserine. T166 carries the phosphothreonine modification. Residues 296–318 form a disordered region; it reads SPTDPLKLPRPVSKQDAKSSDSK. Over residues 308-318 the composition is skewed to basic and acidic residues; it reads SKQDAKSSDSK.

It belongs to the protein kinase superfamily. CMGC Ser/Thr protein kinase family. CDC2/CDKX subfamily. In terms of processing, autophosphorylated. Expressed at low levels in suspension cell culture, but not in plant organs.

It localises to the nucleus. It carries out the reaction L-seryl-[protein] + ATP = O-phospho-L-seryl-[protein] + ADP + H(+). It catalyses the reaction L-threonyl-[protein] + ATP = O-phospho-L-threonyl-[protein] + ADP + H(+). The enzyme catalyses [DNA-directed RNA polymerase] + ATP = phospho-[DNA-directed RNA polymerase] + ADP + H(+). The chain is Cyclin-dependent kinase D-1 (CDKD-1) from Arabidopsis thaliana (Mouse-ear cress).